Reading from the N-terminus, the 90-residue chain is Accessory gland-specific peptide 26Ab (90 aa).

The N-terminal stretch at 1-21 is a signal peptide; sequence MNYFAVLCIFSCICLWQFSDA.

Main cells of the accessory glands of males.

It is found in the secreted. The protein localises to the extracellular space. In terms of biological role, this protein is transferred from male to female during mating and may affect egglaying and behavior after mating. This Drosophila sechellia (Fruit fly) protein is Accessory gland-specific peptide 26Ab (Acp26Ab).